The sequence spans 205 residues: 3-demethoxyubiquinol 3-hydroxylase (205 aa).

Glu-54, Glu-84, His-87, Glu-136, Glu-168, and His-171 together coordinate Fe cation.

This sequence belongs to the COQ7 family. Fe cation is required as a cofactor.

The protein resides in the cell membrane. The catalysed reaction is a 5-methoxy-2-methyl-3-(all-trans-polyprenyl)benzene-1,4-diol + AH2 + O2 = a 3-demethylubiquinol + A + H2O. It participates in cofactor biosynthesis; ubiquinone biosynthesis. Its function is as follows. Catalyzes the hydroxylation of 2-nonaprenyl-3-methyl-6-methoxy-1,4-benzoquinol during ubiquinone biosynthesis. The chain is 3-demethoxyubiquinol 3-hydroxylase from Acidovorax sp. (strain JS42).